We begin with the raw amino-acid sequence, 318 residues long: MSFASEVKKELTQIAITDHEMKAELAALARMNGAISFGLGRGLTLDISTENASIARRIYSLLKRAYAVHLDLLVRKKMRLKKNNVYIVRVKQQADKILQDLGILGEGFTMIRSISDSILKDERRARAYLRGAFLAGGSLNNPATSSYHLEIFSLYEEHNAALRSLTNQFDLNAKAIERKKGHILYIKESEKISDFLKLVGATYSMLRFEDVRILKDMRNSVNRLVNCETANLNKTVGAALRQVENIKFLERTVGLDVLPDKLKEIAILRVTHQDVTLQELGEMVESGSISKSGINHRLRKIDQIADKIRNGESMTGAL.

Residues Thr-276 to Asn-310 constitute a DNA-binding region (H-T-H motif).

It belongs to the WhiA family.

Functionally, involved in cell division and chromosome segregation. The protein is Probable cell division protein WhiA of Exiguobacterium sibiricum (strain DSM 17290 / CCUG 55495 / CIP 109462 / JCM 13490 / 255-15).